Here is a 216-residue protein sequence, read N- to C-terminus: N-(5'-phosphoribosyl)anthranilate isomerase (216 aa).

Belongs to the TrpF family.

The enzyme catalyses N-(5-phospho-beta-D-ribosyl)anthranilate = 1-(2-carboxyphenylamino)-1-deoxy-D-ribulose 5-phosphate. It participates in amino-acid biosynthesis; L-tryptophan biosynthesis; L-tryptophan from chorismate: step 3/5. The sequence is that of N-(5'-phosphoribosyl)anthranilate isomerase from Methanopyrus kandleri (strain AV19 / DSM 6324 / JCM 9639 / NBRC 100938).